The following is a 152-amino-acid chain: MSDDWESKTVIGSRARVGGGGPRATVAKTQAEINAAMRSGNVLSTDKKYASANSKDGGDGQRLTKIDRSDDIIAPPKVEASVGKAIIKGRSEKGLTQKELAVKINEKPQVVNDYESGRAQPNQQVLSKMERVLGIKLRGKDIGLPLGPKGKK.

Positions 1 to 24 (MSDDWESKTVIGSRARVGGGGPRA) are disordered. The HTH cro/C1-type domain occupies 86 to 140 (IIKGRSEKGLTQKELAVKINEKPQVVNDYESGRAQPNQQVLSKMERVLGIKLRGK). The H-T-H motif DNA-binding region spans 97–116 (QKELAVKINEKPQVVNDYES).

The protein belongs to the MBF1 family.

Functionally, transcriptional coactivator that stimulates GCN4-dependent transcriptional activity by bridging the DNA-binding region of GCN4 and TBP (SPT15), thereby recruiting TBP to GCN4-bound promoters. Involved in induction of the ribosome quality control (RQC) pathway; a pathway that degrades nascent peptide chains during problematic translation. Required to prevent stalled ribosomes from frameshifting. The chain is Putative multi-protein-binding factor 1 (MBF1) from Yarrowia lipolytica (strain CLIB 122 / E 150) (Yeast).